The primary structure comprises 433 residues: uncharacterized protein (433 aa).

11 consecutive transmembrane segments (helical) span residues 28–48 (FAAL…SHII), 56–76 (IYGW…YPFF), 102–122 (IWIF…AVGL), 126–146 (AILT…FIVI), 164–184 (LSKL…IIAL), 207–227 (ALGF…ISAI), 250–270 (FNVG…LGAL), 304–324 (GLIA…VIDG), 345–365 (SYLN…IFYF), 375–395 (FAMI…LSLV), and 406–426 (LLWL…LFIA).

The protein resides in the cell membrane. This is an uncharacterized protein from Pasteurella multocida (strain Pm70).